The sequence spans 192 residues: Small ribosomal subunit protein uS4c-2 (192 aa).

The S4 RNA-binding domain maps to 91–155 (TRLDHLVYRA…PKPPEYLPPY (65 aa)).

This sequence belongs to the universal ribosomal protein uS4 family. In terms of assembly, part of the 30S ribosomal subunit. Contacts protein S5. The interaction surface between S4 and S5 is involved in control of translational fidelity.

Its subcellular location is the plastid. It localises to the chloroplast. Its function is as follows. One of the primary rRNA binding proteins, it binds directly to 16S rRNA where it nucleates assembly of the body of the 30S subunit. In terms of biological role, with S5 and S12 plays an important role in translational accuracy. This chain is Small ribosomal subunit protein uS4c-2, found in Cyanidium caldarium (Red alga).